The primary structure comprises 197 residues: Imidazoleglycerol-phosphate dehydratase (197 aa).

The protein belongs to the imidazoleglycerol-phosphate dehydratase family.

The protein resides in the cytoplasm. The catalysed reaction is D-erythro-1-(imidazol-4-yl)glycerol 3-phosphate = 3-(imidazol-4-yl)-2-oxopropyl phosphate + H2O. The protein operates within amino-acid biosynthesis; L-histidine biosynthesis; L-histidine from 5-phospho-alpha-D-ribose 1-diphosphate: step 6/9. In Azorhizobium caulinodans (strain ATCC 43989 / DSM 5975 / JCM 20966 / LMG 6465 / NBRC 14845 / NCIMB 13405 / ORS 571), this protein is Imidazoleglycerol-phosphate dehydratase.